A 185-amino-acid chain; its full sequence is ADP-ribosylation factor (185 aa).

Glycine 2 is lipidated: N-myristoyl glycine. GTP-binding positions include 27–34, 70–74, and 129–132; these read GLDAAGKT, DVGGQ, and NKQD.

The protein belongs to the small GTPase superfamily. Arf family.

The protein localises to the golgi apparatus. Functionally, GTP-binding protein involved in protein trafficking; may modulate vesicle budding and uncoating within the Golgi apparatus. This Neurospora crassa (strain ATCC 24698 / 74-OR23-1A / CBS 708.71 / DSM 1257 / FGSC 987) protein is ADP-ribosylation factor.